A 157-amino-acid chain; its full sequence is Peroxiredoxin Bcp (157 aa).

Positions 3–156 (IEIGQKAPDL…ALQTLKDMSE (154 aa)) constitute a Thioredoxin domain. C45 acts as the Cysteine sulfenic acid (-SOH) intermediate in catalysis. Residues C45 and C50 are joined by a disulfide bond.

Belongs to the peroxiredoxin family. BCP/PrxQ subfamily. In terms of assembly, monomer.

The catalysed reaction is a hydroperoxide + [thioredoxin]-dithiol = an alcohol + [thioredoxin]-disulfide + H2O. Thiol-specific peroxidase that catalyzes the reduction of hydrogen peroxide and organic hydroperoxides to water and alcohols, respectively. Plays a role in cell protection against oxidative stress by detoxifying peroxides and as sensor of hydrogen peroxide-mediated signaling events. The sequence is that of Peroxiredoxin Bcp (ygaF) from Bacillus subtilis (strain 168).